The chain runs to 537 residues: Chaperonin GroEL (537 aa).

ATP contacts are provided by residues 31–34 (TLGP), 87–91 (DGTTT), Gly-415, and Asp-495.

The protein belongs to the chaperonin (HSP60) family. Forms a cylinder of 14 subunits composed of two heptameric rings stacked back-to-back. Interacts with the co-chaperonin GroES.

Its subcellular location is the cytoplasm. The enzyme catalyses ATP + H2O + a folded polypeptide = ADP + phosphate + an unfolded polypeptide.. In terms of biological role, together with its co-chaperonin GroES, plays an essential role in assisting protein folding. The GroEL-GroES system forms a nano-cage that allows encapsulation of the non-native substrate proteins and provides a physical environment optimized to promote and accelerate protein folding. The chain is Chaperonin GroEL from Methanoregula boonei (strain DSM 21154 / JCM 14090 / 6A8).